A 63-amino-acid polypeptide reads, in one-letter code: Large ribosomal subunit protein uL29 (63 aa).

This sequence belongs to the universal ribosomal protein uL29 family.

In Hahella chejuensis (strain KCTC 2396), this protein is Large ribosomal subunit protein uL29.